An 897-amino-acid polypeptide reads, in one-letter code: Translation initiation factor IF-2 (897 aa).

Disordered stretches follow at residues 69–88 (RKTK…KEVQ) and 95–304 (RTYV…NAMK). Over residues 101 to 161 (SALEDEQRQA…EEKARIEAQQ (61 aa)) the composition is skewed to basic and acidic residues. Residues 162-179 (KARQAQQPAKAAGSTAQQ) show a composition bias toward low complexity. Composition is skewed to basic and acidic residues over residues 180-196 (EAEK…KRQQ), 203-217 (KAEE…EARV), 226-239 (WAEE…ESSD), and 277-286 (RREDDRDARN). Basic residues predominate over residues 287–296 (PRARKGKRGK). The region spanning 397 to 566 (PRAPVVTIMG…LIQSEVLELK (170 aa)) is the tr-type G domain. Positions 406 to 413 (GHVDHGKT) are G1. Residue 406 to 413 (GHVDHGKT) coordinates GTP. Residues 431-435 (GITQH) form a G2 region. The G3 stretch occupies residues 452 to 455 (DTPG). GTP-binding positions include 452 to 456 (DTPGH) and 506 to 509 (NKID). Residues 506 to 509 (NKID) form a G4 region. A G5 region spans residues 542–544 (SAK).

This sequence belongs to the TRAFAC class translation factor GTPase superfamily. Classic translation factor GTPase family. IF-2 subfamily.

It localises to the cytoplasm. In terms of biological role, one of the essential components for the initiation of protein synthesis. Protects formylmethionyl-tRNA from spontaneous hydrolysis and promotes its binding to the 30S ribosomal subunits. Also involved in the hydrolysis of GTP during the formation of the 70S ribosomal complex. The polypeptide is Translation initiation factor IF-2 (Aeromonas hydrophila subsp. hydrophila (strain ATCC 7966 / DSM 30187 / BCRC 13018 / CCUG 14551 / JCM 1027 / KCTC 2358 / NCIMB 9240 / NCTC 8049)).